The sequence spans 422 residues: Glutamyl-tRNA reductase (422 aa).

Residues 50–53 (TCNR), Ser110, 115–117 (ETQ), and Gln121 each bind substrate. The active-site Nucleophile is Cys51. 190–195 (GAGEMS) contributes to the NADP(+) binding site.

The protein belongs to the glutamyl-tRNA reductase family. As to quaternary structure, homodimer.

The catalysed reaction is (S)-4-amino-5-oxopentanoate + tRNA(Glu) + NADP(+) = L-glutamyl-tRNA(Glu) + NADPH + H(+). It functions in the pathway porphyrin-containing compound metabolism; protoporphyrin-IX biosynthesis; 5-aminolevulinate from L-glutamyl-tRNA(Glu): step 1/2. In terms of biological role, catalyzes the NADPH-dependent reduction of glutamyl-tRNA(Glu) to glutamate 1-semialdehyde (GSA). This chain is Glutamyl-tRNA reductase, found in Campylobacter fetus subsp. fetus (strain 82-40).